The following is a 370-amino-acid chain: Elongation factor Ts, mitochondrial (370 aa).

Residues 1-29 (MALLSAAPRALRLPRRLPLGAALPALRAL) constitute a mitochondrion transit peptide.

Belongs to the EF-Ts family.

Its subcellular location is the mitochondrion. Its function is as follows. Associates with the EF-Tu.GDP complex and induces the exchange of GDP to GTP. It remains bound to the aminoacyl-tRNA.EF-Tu.GTP complex up to the GTP hydrolysis stage on the ribosome. The sequence is that of Elongation factor Ts, mitochondrial from Cryptococcus neoformans var. neoformans serotype D (strain B-3501A) (Filobasidiella neoformans).